A 744-amino-acid chain; its full sequence is 4'-phospho-dehydrooxetanocin synthase (744 aa).

Residues 119 to 259 enclose the B12-binding domain; that stretch reads TVTLVNLCVI…KMLKKELKLD (141 aa). Positions 135, 139, 184, 241, 242, and 308 each coordinate cob(II)alamin. Residues 299–545 enclose the Radical SAM core domain; that stretch reads SKFRGALTLE…IVSYMLASME (247 aa). Residues C313, C318, and C321 each contribute to the [4Fe-4S] cluster site. P322, H325, K326, A361, and E363 together coordinate cob(II)alamin. Residues E436 and E545 each coordinate S-adenosyl-L-methionine.

The protein belongs to the radical SAM superfamily. It depends on [4Fe-4S] cluster as a cofactor. Requires cob(II)alamin as cofactor.

It catalyses the reaction dAMP + S-adenosyl-L-methionine = 4'-phospho-dehydrooxetanocin + 5'-deoxyadenosine + L-methionine + H(+). The enzyme catalyses AH2 + 2 S-adenosyl-L-methionine = 2 5'-deoxyadenosin-5'-yl radical + 2 L-methionine + A + 2 H(+). The catalysed reaction is 2 5'-deoxyadenosin-5'-yl radical + 2 dAMP + A = 2 4'-phospho-dehydrooxetanocin + 2 5'-deoxyadenosine + AH2. With respect to regulation, requires OxsA for the oxidative ring contraction activity. Activation of OxsB requires its direct interaction with OxsA and is independent of OxsA phosphohydrolase activity. In contrast to ring contraction, methylation does not require the presence of OxsA. Its function is as follows. Isomerase involved in the biosynthesis of oxetanocin A (OXT-A), a nucleoside analog with antitumor, antiviral and antibacterial properties. Catalyzes an oxidative ring contraction of dAMP, forming an oxetane aldehyde. In addition, shows methyltransferase activity in vitro and is able to catalyze the radical mediated, stereoselective C2'-methylation of dAMP to form methylated 2'-dAMP. Also catalyzes the demethylation of S-adenosyl-L-methionine (SAM) to S-adenosyl-L-homocysteine (SAH). The protein is 4'-phospho-dehydrooxetanocin synthase of Priestia megaterium (Bacillus megaterium).